A 1053-amino-acid polypeptide reads, in one-letter code: Carbamoyl phosphate synthase large chain (1053 aa).

Residues 1 to 397 (MPKRTDIKKV…SFMKAKRSID (397 aa)) are carboxyphosphate synthetic domain. Positions 127, 167, 173, 174, 206, 208, 213, 239, 240, 241, 282, and 294 each coordinate ATP. The ATP-grasp 1 domain maps to 131–323 (RDLMNEIGEP…IARVAAKIAI (193 aa)). Glutamine 282, glutamate 294, and asparagine 296 together coordinate Mg(2+). Residues glutamine 282, glutamate 294, and asparagine 296 each contribute to the Mn(2+) site. An oligomerization domain region spans residues 398-530 (TDVRTHTSPS…YSTREGTSEI (133 aa)). The tract at residues 531–919 (VRDKKQKILI…YKACISADNE (389 aa)) is carbamoyl phosphate synthetic domain. Residues 661–852 (SVLLTTLQIP…IAKIAAKVMI (192 aa)) enclose the ATP-grasp 2 domain. Residues arginine 697, serine 736, leucine 738, glutamate 743, glycine 768, isoleucine 769, histidine 770, serine 771, glutamine 811, and glutamate 823 each coordinate ATP. Residues glutamine 811, glutamate 823, and asparagine 825 each coordinate Mg(2+). Mn(2+) contacts are provided by glutamine 811, glutamate 823, and asparagine 825. In terms of domain architecture, MGS-like spans 918-1053 (NELPLKGNVF…TLEPLSHYLR (136 aa)). Positions 920–1053 (LPLKGNVFVS…TLEPLSHYLR (134 aa)) are allosteric domain.

This sequence belongs to the CarB family. As to quaternary structure, composed of two chains; the small (or glutamine) chain promotes the hydrolysis of glutamine to ammonia, which is used by the large (or ammonia) chain to synthesize carbamoyl phosphate. Tetramer of heterodimers (alpha,beta)4. It depends on Mg(2+) as a cofactor. Mn(2+) is required as a cofactor.

It catalyses the reaction hydrogencarbonate + L-glutamine + 2 ATP + H2O = carbamoyl phosphate + L-glutamate + 2 ADP + phosphate + 2 H(+). The enzyme catalyses hydrogencarbonate + NH4(+) + 2 ATP = carbamoyl phosphate + 2 ADP + phosphate + 2 H(+). Its pathway is amino-acid biosynthesis; L-arginine biosynthesis; carbamoyl phosphate from bicarbonate: step 1/1. The protein operates within pyrimidine metabolism; UMP biosynthesis via de novo pathway; (S)-dihydroorotate from bicarbonate: step 1/3. Functionally, large subunit of the glutamine-dependent carbamoyl phosphate synthetase (CPSase). CPSase catalyzes the formation of carbamoyl phosphate from the ammonia moiety of glutamine, carbonate, and phosphate donated by ATP, constituting the first step of 2 biosynthetic pathways, one leading to arginine and/or urea and the other to pyrimidine nucleotides. The large subunit (synthetase) binds the substrates ammonia (free or transferred from glutamine from the small subunit), hydrogencarbonate and ATP and carries out an ATP-coupled ligase reaction, activating hydrogencarbonate by forming carboxy phosphate which reacts with ammonia to form carbamoyl phosphate. The chain is Carbamoyl phosphate synthase large chain from Methanoregula boonei (strain DSM 21154 / JCM 14090 / 6A8).